The primary structure comprises 105 residues: Large ribosomal subunit protein bL21 (105 aa).

It belongs to the bacterial ribosomal protein bL21 family. Part of the 50S ribosomal subunit. Contacts protein L20.

In terms of biological role, this protein binds to 23S rRNA in the presence of protein L20. The sequence is that of Large ribosomal subunit protein bL21 from Desulfatibacillum aliphaticivorans.